We begin with the raw amino-acid sequence, 809 residues long: Glycerol-3-phosphate acyltransferase (809 aa).

An HXXXXD motif motif is present at residues 306-311 (HRSHMD).

The protein belongs to the GPAT/DAPAT family.

It is found in the cell inner membrane. The catalysed reaction is sn-glycerol 3-phosphate + an acyl-CoA = a 1-acyl-sn-glycero-3-phosphate + CoA. It participates in phospholipid metabolism; CDP-diacylglycerol biosynthesis; CDP-diacylglycerol from sn-glycerol 3-phosphate: step 1/3. This is Glycerol-3-phosphate acyltransferase from Vibrio vulnificus (strain CMCP6).